Consider the following 867-residue polypeptide: Xylosyltransferase 2 (867 aa).

Residues 1 to 15 are Cytoplasmic-facing; it reads MVASARVQKLVRRYK. The helical; Signal-anchor for type II membrane protein transmembrane segment at 16–36 threads the bilayer; it reads LAIATALAILLLQGLVVWSFS. Over 37–867 the chain is Lumenal; sequence VLEDDEPGEK…GPVKADGRLR (831 aa). The tract at residues 41–122 is disordered; the sequence is DEPGEKGRQK…PPPEAPGRQN (82 aa). The span at 53–65 shows a compositional bias: basic and acidic residues; the sequence is RPLDPSEGSKDTD. The segment covering 73–82 has biased composition (basic residues); sequence SAGRRHGRWR. N-linked (GlcNAc...) asparagine glycosylation occurs at Asn122. 2 disulfide bridges follow: Cys161/Cys189 and Cys205/Cys447. UDP-alpha-D-xylose-binding positions include Val238, Asp266, and 295–297; that span reads TIW. Asn326 carries N-linked (GlcNAc...) asparagine glycosylation. UDP-alpha-D-xylose-binding positions include 399-400, Ser480, and 503-504; these read DW and RK. Intrachain disulfides connect Cys580–Cys835 and Cys828–Cys841. N-linked (GlcNAc...) asparagine glycosylation occurs at Asn685.

The protein belongs to the glycosyltransferase 14 family. XylT subfamily. Monomer. It depends on Mg(2+) as a cofactor. The cofactor is Mn(2+). In terms of processing, contains disulfide bonds.

The protein localises to the golgi apparatus membrane. It is found in the secreted. The enzyme catalyses UDP-alpha-D-xylose + L-seryl-[protein] = 3-O-(beta-D-xylosyl)-L-seryl-[protein] + UDP + H(+). It participates in glycan metabolism; chondroitin sulfate biosynthesis. It functions in the pathway glycan metabolism; heparan sulfate biosynthesis. Functionally, catalyzes the first step in the biosynthesis of chondroitin sulfate, heparan sulfate and dermatan sulfate proteoglycans, such as DCN. Transfers D-xylose from UDP-D-xylose to specific serine residues of the core protein. This Bos taurus (Bovine) protein is Xylosyltransferase 2 (XYLT2).